Consider the following 630-residue polypeptide: Probable potassium transport system protein Kup 2 (630 aa).

The next 12 membrane-spanning stretches (helical) occupy residues 14-34 (ATGF…DIGT), 56-76 (VIVL…VTAK), 108-128 (VPLL…SMIT), 145-165 (PALQ…LFAF), 176-196 (AFGP…LLHI), 214-234 (FMLS…LAVT), 255-275 (WLFF…AMVL), 293-313 (LLVP…QAVI), 352-372 (MLLL…SALA), 375-395 (YGIA…VVVW), 402-422 (PAAA…FFSA), and 427-447 (LMEG…LVWT).

This sequence belongs to the HAK/KUP transporter (TC 2.A.72) family.

It localises to the cell inner membrane. It catalyses the reaction K(+)(in) + H(+)(in) = K(+)(out) + H(+)(out). Its function is as follows. Transport of potassium into the cell. Likely operates as a K(+):H(+) symporter. The polypeptide is Probable potassium transport system protein Kup 2 (Rhodopseudomonas palustris (strain BisA53)).